The sequence spans 221 residues: PKHD-type hydroxylase PMN2A_0775 (221 aa).

Residues 80-174 (LIHGVMFTQS…RHVCVGWIQS (95 aa)) enclose the Fe2OG dioxygenase domain. Positions 98, 100, and 155 each coordinate Fe cation. R165 lines the 2-oxoglutarate pocket.

Fe(2+) serves as cofactor. It depends on L-ascorbate as a cofactor.

The protein is PKHD-type hydroxylase PMN2A_0775 of Prochlorococcus marinus (strain NATL2A).